The chain runs to 380 residues: Cytochrome b (380 aa).

The next 4 helical transmembrane spans lie at 34–54, 78–99, 114–134, and 179–199; these read FGSL…LLAA, WLIR…YMHI, WNTG…GYVL, and FFTL…IHLT. Residues His-84 and His-98 each contribute to the heme b site. Heme b contacts are provided by His-183 and His-197. His-202 is a binding site for a ubiquinone. 4 consecutive transmembrane segments (helical) span residues 227-247, 289-309, 321-341, and 348-368; these read LKDT…ALFS, LGGV…PLLH, LSQL…WVGS, and FIII…ILFP.

It belongs to the cytochrome b family. As to quaternary structure, the cytochrome bc1 complex contains 11 subunits: 3 respiratory subunits (MT-CYB, CYC1 and UQCRFS1), 2 core proteins (UQCRC1 and UQCRC2) and 6 low-molecular weight proteins (UQCRH/QCR6, UQCRB/QCR7, UQCRQ/QCR8, UQCR10/QCR9, UQCR11/QCR10 and a cleavage product of UQCRFS1). This cytochrome bc1 complex then forms a dimer. The cofactor is heme b.

The protein resides in the mitochondrion inner membrane. Its function is as follows. Component of the ubiquinol-cytochrome c reductase complex (complex III or cytochrome b-c1 complex) that is part of the mitochondrial respiratory chain. The b-c1 complex mediates electron transfer from ubiquinol to cytochrome c. Contributes to the generation of a proton gradient across the mitochondrial membrane that is then used for ATP synthesis. The protein is Cytochrome b (MT-CYB) of Balearica regulorum (Grey crowned-crane).